Consider the following 130-residue polypeptide: Histone H2A type 2-A (130 aa).

The disordered stretch occupies residues 1–22; it reads MSGRGKQGGKARAKAKSRSSRA. N-acetylserine is present on Ser2. At Ser2 the chain carries Phosphoserine; by RPS6KA5. A Citrulline; alternate modification is found at Arg4. Symmetric dimethylarginine; by PRMT5; alternate is present on Arg4. An N6-(2-hydroxyisobutyryl)lysine; alternate mark is found at Lys6 and Lys10. The residue at position 6 (Lys6) is an N6-(beta-hydroxybutyryl)lysine; alternate. Lys6 is subject to N6-acetyllysine; alternate. The span at 7 to 19 shows a compositional bias: basic residues; it reads QGGKARAKAKSRS. Lys10 is modified (N6-lactoyllysine; alternate). N6-succinyllysine; alternate is present on Lys10. Glycyl lysine isopeptide (Lys-Gly) (interchain with G-Cter in ubiquitin) cross-links involve residues Lys14 and Lys16. Residue Lys37 is modified to N6-(2-hydroxyisobutyryl)lysine; alternate. Lys37 bears the N6-(beta-hydroxybutyryl)lysine; alternate mark. Lys37 bears the N6-crotonyllysine; alternate mark. N6-(2-hydroxyisobutyryl)lysine is present on residues Lys75 and Lys76. Residue Lys96 is modified to N6-(2-hydroxyisobutyryl)lysine; alternate. Lys96 carries the post-translational modification N6-succinyllysine; alternate. Lys96 is modified (N6-glutaryllysine; alternate). N6-glutaryllysine is present on Lys100. Gln105 carries the post-translational modification N5-methylglutamine. Lys119 is modified (N6-(2-hydroxyisobutyryl)lysine; alternate). N6-crotonyllysine; alternate occurs at positions 119 and 120. An N6-glutaryllysine; alternate mark is found at Lys119 and Lys120. Position 120 is an N6-(beta-hydroxybutyryl)lysine; alternate (Lys120). Residue Lys120 forms a Glycyl lysine isopeptide (Lys-Gly) (interchain with G-Cter in ubiquitin); alternate linkage. The residue at position 121 (Thr121) is a Phosphothreonine; by DCAF1. At Lys126 the chain carries N6-(beta-hydroxybutyryl)lysine; alternate. Lys126 carries the post-translational modification N6-crotonyllysine; alternate. Lys126 carries the post-translational modification N6-glutaryllysine; alternate.

This sequence belongs to the histone H2A family. The nucleosome is a histone octamer containing two molecules each of H2A, H2B, H3 and H4 assembled in one H3-H4 heterotetramer and two H2A-H2B heterodimers. The octamer wraps approximately 147 bp of DNA. In terms of processing, deiminated on Arg-4 in granulocytes upon calcium entry. Monoubiquitination of Lys-120 (H2AK119Ub) by RING1, TRIM37 and RNF2/RING2 complex gives a specific tag for epigenetic transcriptional repression and participates in X chromosome inactivation of female mammals. It is involved in the initiation of both imprinted and random X inactivation. Ubiquitinated H2A is enriched in inactive X chromosome chromatin. Ubiquitination of H2A functions downstream of methylation of 'Lys-27' of histone H3 (H3K27me). H2AK119Ub by RNF2/RING2 can also be induced by ultraviolet and may be involved in DNA repair. Following DNA double-strand breaks (DSBs), it is ubiquitinated through 'Lys-63' linkage of ubiquitin moieties by the E2 ligase UBE2N and the E3 ligases RNF8 and RNF168, leading to the recruitment of repair proteins to sites of DNA damage. Ubiquitination at Lys-14 and Lys-16 (H2AK13Ub and H2AK15Ub, respectively) in response to DNA damage is initiated by RNF168 that mediates monoubiquitination at these 2 sites, and 'Lys-63'-linked ubiquitin are then conjugated to monoubiquitin; RNF8 is able to extend 'Lys-63'-linked ubiquitin chains in vitro. H2AK119Ub and ionizing radiation-induced 'Lys-63'-linked ubiquitination (H2AK13Ub and H2AK15Ub) are distinct events. Post-translationally, phosphorylation on Ser-2 (H2AS1ph) is enhanced during mitosis. Phosphorylation on Ser-2 by RPS6KA5/MSK1 directly represses transcription. Acetylation of H3 inhibits Ser-2 phosphorylation by RPS6KA5/MSK1. Phosphorylation at Thr-121 (H2AT120ph) by DCAF1 is present in the regulatory region of many tumor suppresor genes and down-regulates their transcription. In terms of processing, symmetric dimethylation on Arg-4 by the PRDM1/PRMT5 complex may play a crucial role in the germ-cell lineage. Glutamine methylation at Gln-105 (H2AQ104me) by FBL is specifically dedicated to polymerase I. It is present at 35S ribosomal DNA locus and impairs binding of the FACT complex. Post-translationally, crotonylation (Kcr) is specifically present in male germ cells and marks testis-specific genes in post-meiotic cells, including X-linked genes that escape sex chromosome inactivation in haploid cells. Crotonylation marks active promoters and enhancers and confers resistance to transcriptional repressors. It is also associated with post-meiotically activated genes on autosomes. In terms of processing, hydroxybutyrylation of histones is induced by starvation. Lactylated in macrophages by EP300/P300 by using lactoyl-CoA directly derived from endogenous or exogenous lactate, leading to stimulates gene transcription.

The protein resides in the nucleus. It is found in the chromosome. Functionally, core component of nucleosome. Nucleosomes wrap and compact DNA into chromatin, limiting DNA accessibility to the cellular machineries which require DNA as a template. Histones thereby play a central role in transcription regulation, DNA repair, DNA replication and chromosomal stability. DNA accessibility is regulated via a complex set of post-translational modifications of histones, also called histone code, and nucleosome remodeling. In Mus musculus (Mouse), this protein is Histone H2A type 2-A (Hist2h2aa1).